The primary structure comprises 489 residues: Serotonin-gated chloride channel mod-1 (489 aa).

The signal sequence occupies residues 1-20; that stretch reads MKFIPEITLLLLLFVHSTQA. Topologically, residues 21 to 240 are extracellular; it reads KGKRRKCPEG…VTFTFKRRYG (220 aa). Residues Asn-44, Asn-103, and Asn-144 are each glycosylated (N-linked (GlcNAc...) asparagine). Serotonin is bound by residues Tyr-180 and Trp-226. 3 helical membrane passes run 241–261, 274–294, and 304–324; these read FYII…WVSF, VGIS…KNLP, and VWML…AFVC. Residues 325-458 are Cytoplasmic-facing; it reads YISRCQNSVR…ARFHPEAVDK (134 aa). The tract at residues 365 to 398 is disordered; that stretch reads GSVISHYHPTSNGNGNNNRHDTPQVTGRGSLHRN. Over residues 372-391 the composition is skewed to polar residues; sequence HPTSNGNGNNNRHDTPQVTG. Residues 459–479 traverse the membrane as a helical segment; sequence FSIVAFPLAFTMFNLVYWWHY.

Belongs to the ligand-gated ion channel (TC 1.A.9) family. Expressed in a subset of muscles, and head and tail neurons, including RME and GABAergic ventral nerve cord neurons. Expressed in AIY, RME, RID, RIF, ASI, DD1-6, and PVN neurons.

Its subcellular location is the membrane. It is found in the cell membrane. In terms of biological role, functions as a 5-hydroxytryptamine (serotonin) receptor. This receptor is a ligand-gated anion-specific ion channel, selective for chloride ions. Relays a long-range endocrine signal from the body cavity neurons to modulate distal adipose triglyceride lipase atgl-1 function, via the nuclear receptor nhr-76. Together with the G-protein coupled serotonin receptor ser-1 involved in male mating behavior. May mediate an inhibitory effect of serotonin on egg laying. Involved in regulating locomotory behavior, perhaps by modulating interneuronal signaling, acting in concert with G-protein coupled serotonin receptor ser-4. In the presence of food, plays a role in initiating and extending dwelling behavior, perhaps acting in AIY, RIF and ASI neurons, in opposition to neuropeptide PDF-mediated signaling. Plays a role in aversive learning upon exposure to pathogens such as Gram-negative bacterium P.aeruginosa strain PA14; perhaps acting in interneurons in response to serotonin released by the serotonergic ADF neurons. This is Serotonin-gated chloride channel mod-1 from Caenorhabditis elegans.